The sequence spans 841 residues: ATP-dependent helicase Lhr-Core (841 aa).

Glutamine 39, lysine 62, threonine 63, aspartate 181, glutamate 182, isoleucine 352, arginine 369, and histidine 372 together coordinate ATP. The region spanning 43–234 (IKEIHEGKNV…FLVGNGRDCY (192 aa)) is the Helicase ATP-binding domain. Residues 181 to 184 (DEIH) carry the DEVH box motif. The 151-residue stretch at 266-416 (RLYNLLKKLI…RIHIPKNCLD (151 aa)) folds into the Helicase C-terminal domain. The WH domain stretch occupies residues 417–500 (VLAQHLVGMA…IYYMNVGTIP (84 aa)). The tract at residues 501-841 (DETAVDVIAD…MEFISMKGKK (341 aa)) is domain 4.

It belongs to the Lhr helicase family. Lhr-Core subfamily. Monomer.

It catalyses the reaction Couples ATP hydrolysis with the unwinding of duplex DNA by translocating in the 3'-5' direction.. It carries out the reaction ATP + H2O = ADP + phosphate + H(+). In terms of biological role, DNA helicase that loads on single-stranded (ss)DNA and translocates in a 3'-5' direction, probably involved in DNA repair. Archaeal orthologs have double-stranded (ds)DNA and/or RNA:DNA helicase activity. The protein is ATP-dependent helicase Lhr-Core of Methanocaldococcus jannaschii (strain ATCC 43067 / DSM 2661 / JAL-1 / JCM 10045 / NBRC 100440) (Methanococcus jannaschii).